The primary structure comprises 181 residues: Adenine phosphoribosyltransferase (181 aa).

Belongs to the purine/pyrimidine phosphoribosyltransferase family. As to quaternary structure, homodimer.

The protein localises to the cytoplasm. The catalysed reaction is AMP + diphosphate = 5-phospho-alpha-D-ribose 1-diphosphate + adenine. It participates in purine metabolism; AMP biosynthesis via salvage pathway; AMP from adenine: step 1/1. Functionally, catalyzes a salvage reaction resulting in the formation of AMP, that is energically less costly than de novo synthesis. The sequence is that of Adenine phosphoribosyltransferase from Vibrio atlanticus (strain LGP32) (Vibrio splendidus (strain Mel32)).